The primary structure comprises 105 residues: MRGMGNMNNMMKQMQKMQKDMAKAQEELKELSVEGTAGGGMVKVVVSGHKEVLDVIIAEDVVDPDDVDMLQDLVLAAINDAMKQADQLVNDKMGRFTQGMNLPGF.

Low complexity predominate over residues 1–16 (MRGMGNMNNMMKQMQK). A disordered region spans residues 1–26 (MRGMGNMNNMMKQMQKMQKDMAKAQE). Basic and acidic residues predominate over residues 17-26 (MQKDMAKAQE).

Belongs to the YbaB/EbfC family. Homodimer.

The protein resides in the cytoplasm. It localises to the nucleoid. Its function is as follows. Binds to DNA and alters its conformation. May be involved in regulation of gene expression, nucleoid organization and DNA protection. This Exiguobacterium sp. (strain ATCC BAA-1283 / AT1b) protein is Nucleoid-associated protein EAT1b_1710.